A 369-amino-acid chain; its full sequence is Dehydrogenase pigH (369 aa).

The Enoyl reductase (ER) domain occupies 13-367 (KAPLLEVKAA…QGVSAKKIVV (355 aa)). NADP(+) is bound at residue 44–49 (IDWLIQ). N-linked (GlcNAc...) asparagine glycosylation is found at Asn-79 and Asn-101. Residues 197-200 (SRKN) and Tyr-215 each bind NADP(+). The chain crosses the membrane as a helical span at residues 280–300 (TIIFFVSWIISFKFKGLLKGI). 360-361 (VS) contributes to the NADP(+) binding site.

This sequence belongs to the zinc-containing alcohol dehydrogenase family.

Its subcellular location is the membrane. It participates in secondary metabolite biosynthesis. In terms of biological role, dehydrogenase; part of the gene cluster that mediates the biosynthesis of azaphilone pigments (MonAzPs), a complex mixture of compounds with a common azaphilone skeleton very widely used as food colorants. Within the pathway, pigH might be involved in the late steps of yellow pigments monascin and ankaflavin biosynthesis. The first step of the pathway is performed by the nrPKS pigA that forms the hexaketide precursor from successive condensations of five malonyl-CoA units, with a simple acetyl-CoA starter unit. The role of esterase pigG is not clear, but it may play at most a supplementary role in the formation of the benzaldehyde produced by the pigA nrPKS. This very reactive benzaldehyde is intercepted by the pigC ketoreductase that to provide the first stable enzyme-free MonAzPs intermediate, 6-(4-hydroxy-2-oxopentyl)-3-methyl-2,4-dioxocyclohexane carbaldehyde, also known as M7PKS-1. The FAD-dependent monooxygenase pigN hydroxylates M7PKS-1 at C-4, which triggers the formation of the pyran ring. PigJ, pigK and pigD are involved in the acetylation of the pyran ring. PigJ and pigK form the two subunits of a dedicated fungal FAS that produces the side chain fatty acyl moiety of MonAzPs and pigD transfers the fatty acyl chain to the C-4 alcohol. PigM and pigO are involved in the elimination of the omega-1 alcohol. PigM acts as an O-acetyltransferase that synthesizes the putative O-11 acetyl intermediate whereas pigO eliminates acetic acid to yield an intermediate with a C10(11) double bond. The dehydration of the C-11 alcohol followed by the reduction of the C6(7) double bond by the NAD(P)H-dependent oxidoreductase pigE increases the electrophilicity of the C-5 ketone of the resulting acyl benzopyran. This in turn sets up the C-5 ketone for an intramolecular Knoevenagel aldol condensation with the C-20 enol of the side chain. This condensation affords the characteristic linear tricyclic carbon skeletons of the yellow pigments that serve as the common precursors for the classical yellow pigments monascin and ankaflavin, orange pigments rubopunctatin and monascorubrin, and red pigments ribropunctamine and monascorubramine. The FAD-dependent oxidoreductase pigF is especially invoved in the biosynthesis of orange and red pigments via desaturation of C6(7). The protein is Dehydrogenase pigH of Monascus ruber (Mold).